Reading from the N-terminus, the 2189-residue chain is Chromatin modification-related protein eaf-1 (2189 aa).

Disordered regions lie at residues 183-400 (VQGS…SGAE), 415-438 (VIGK…TQHP), and 477-601 (EVAK…PPGL). Residues 234 to 253 (PTPQTVAPPATAPTSTTKTA) show a composition bias toward low complexity. Positions 260-277 (AGPKDDTVSRGDAEEKAR) are enriched in basic and acidic residues. 3 stretches are compositionally biased toward polar residues: residues 281–293 (TITS…SNGD), 300–312 (TLSS…QSAP), and 319–333 (ASAS…SQSF). Residues 336 to 349 (PVSRPEQELRRATT) show a composition bias toward basic and acidic residues. Over residues 534-543 (QPQPSSTAPS) the composition is skewed to low complexity. Residues 573–583 (ETQARTSQSSH) are compositionally biased toward polar residues. An HSA domain is found at 722 to 797 (PVRCLEPARP…PPVRAVDNAD (76 aa)). Residues 985 to 1045 (FESRIASQWT…ECFERWVNLE (61 aa)) enclose the Myb-like domain. 2 stretches are compositionally biased toward low complexity: residues 1320 to 1330 (VAVQLQQQQHQ) and 1336 to 1406 (QHPQ…QVTQ). Disordered stretches follow at residues 1320–1428 (VAVQ…PMRP), 1622–1644 (MQTQ…QAQA), 1663–1831 (QKQA…GQVQ), and 1846–2189 (VQGQ…APTK). Low complexity-rich tracts occupy residues 1663-1808 (QKQA…QGQG), 1818-1831 (GQGH…GQVQ), 1846-1863 (VQGQ…PQHA), 1873-2089 (QHAQ…QPQQ), and 2097-2189 (SQPQ…APTK).

Belongs to the EAF1 family. As to quaternary structure, component of the NuA4 histone acetyltransferase complex.

It localises to the nucleus. In terms of biological role, component of the NuA4 histone acetyltransferase complex which is involved in transcriptional activation of selected genes principally by acetylation of nucleosomal histone H4 and H2A. The NuA4 complex is also involved in DNA repair. The sequence is that of Chromatin modification-related protein eaf-1 (eaf-1) from Neurospora crassa (strain ATCC 24698 / 74-OR23-1A / CBS 708.71 / DSM 1257 / FGSC 987).